The chain runs to 878 residues: Phosphoenolpyruvate carboxylase (878 aa).

Residues H140 and K545 contribute to the active site.

Belongs to the PEPCase type 1 family. The cofactor is Mg(2+).

It catalyses the reaction oxaloacetate + phosphate = phosphoenolpyruvate + hydrogencarbonate. Functionally, forms oxaloacetate, a four-carbon dicarboxylic acid source for the tricarboxylic acid cycle. This is Phosphoenolpyruvate carboxylase from Pseudomonas syringae pv. tomato (strain ATCC BAA-871 / DC3000).